The following is a 252-amino-acid chain: 3-dehydroquinate dehydratase (252 aa).

3-dehydroquinate is bound by residues Ser-21, 46–48 (EWR), and Arg-82. Residue His-143 is the Proton donor/acceptor of the active site. Lys-170 (schiff-base intermediate with substrate) is an active-site residue. 3 residues coordinate 3-dehydroquinate: Arg-213, Ser-232, and Gln-236.

It belongs to the type-I 3-dehydroquinase family. As to quaternary structure, homodimer.

The enzyme catalyses 3-dehydroquinate = 3-dehydroshikimate + H2O. Its pathway is metabolic intermediate biosynthesis; chorismate biosynthesis; chorismate from D-erythrose 4-phosphate and phosphoenolpyruvate: step 3/7. Involved in the third step of the chorismate pathway, which leads to the biosynthesis of aromatic amino acids. Catalyzes the cis-dehydration of 3-dehydroquinate (DHQ) and introduces the first double bond of the aromatic ring to yield 3-dehydroshikimate. This chain is 3-dehydroquinate dehydratase, found in Salmonella choleraesuis (strain SC-B67).